A 537-amino-acid chain; its full sequence is Apoptosis inhibitor 5-like protein API5 (537 aa).

An ARM-like and Heat-like helical repeats region spans residues 9–363 (AEVERLYELG…TTNSLCGYKI (355 aa)). Residues 465–537 (WMEQPKKPAP…GGRGRGWGYR (73 aa)) are disordered. Positions 474 to 492 (PTTTGGKRSQPATNGNTPA) are enriched in polar residues.

The protein belongs to the API5 family. In terms of assembly, interacts with AIP1 and AIP2.

It localises to the nucleus. Its function is as follows. Putative anti-apoptotic factor involved in the regulation of tapetal programmed cell death (PCD) and degeneration during anther development. Interacts directly with the DEAD-box ATP-dependent RNA helicases AIP1 and AIP2 that form dimers and bind the promoter region of the cysteine protease CP1 involved in tapetum PCD. This is Apoptosis inhibitor 5-like protein API5 from Oryza sativa subsp. japonica (Rice).